The primary structure comprises 635 residues: Extracellular metalloproteinase mep (635 aa).

An N-terminal signal peptide occupies residues 1 to 19 (MMRGLLLAGALGLPLAVLA). Residues 20–246 (HPTHHAHGLQ…VHGVVDYVAE (227 aa)) constitute a propeptide that is removed on maturation. N287 carries N-linked (GlcNAc...) asparagine glycosylation. Over residues 290-309 (TTRGNNGIAQSNPTGGSQYL) the composition is skewed to polar residues. Positions 290 to 311 (TTRGNNGIAQSNPTGGSQYLKN) are disordered. A Zn(2+)-binding site is contributed by H430. E431 is an active-site residue. H434 contacts Zn(2+).

The protein belongs to the peptidase M36 family. It depends on Zn(2+) as a cofactor.

The protein resides in the secreted. Secreted metalloproteinase that allows assimilation of proteinaceous substrates. The polypeptide is Extracellular metalloproteinase mep (mep) (Aspergillus flavus (strain ATCC 200026 / FGSC A1120 / IAM 13836 / NRRL 3357 / JCM 12722 / SRRC 167)).